The chain runs to 159 residues: 2-C-methyl-D-erythritol 2,4-cyclodiphosphate synthase (159 aa).

A divalent metal cation contacts are provided by Asp-10 and His-12. 4-CDP-2-C-methyl-D-erythritol 2-phosphate is bound by residues 10–12 (DVH) and 36–37 (HS). His-44 provides a ligand contact to a divalent metal cation. 4-CDP-2-C-methyl-D-erythritol 2-phosphate is bound by residues 58–60 (DIG), 63–67 (FPDTD), 102–108 (AQAPRMA), 134–137 (TTSE), Phe-141, and Arg-144.

The protein belongs to the IspF family. As to quaternary structure, homotrimer. A divalent metal cation serves as cofactor.

The catalysed reaction is 4-CDP-2-C-methyl-D-erythritol 2-phosphate = 2-C-methyl-D-erythritol 2,4-cyclic diphosphate + CMP. Its pathway is isoprenoid biosynthesis; isopentenyl diphosphate biosynthesis via DXP pathway; isopentenyl diphosphate from 1-deoxy-D-xylulose 5-phosphate: step 4/6. In terms of biological role, involved in the biosynthesis of isopentenyl diphosphate (IPP) and dimethylallyl diphosphate (DMAPP), two major building blocks of isoprenoid compounds. Catalyzes the conversion of 4-diphosphocytidyl-2-C-methyl-D-erythritol 2-phosphate (CDP-ME2P) to 2-C-methyl-D-erythritol 2,4-cyclodiphosphate (ME-CPP) with a corresponding release of cytidine 5-monophosphate (CMP). The polypeptide is 2-C-methyl-D-erythritol 2,4-cyclodiphosphate synthase (Cellvibrio japonicus (strain Ueda107) (Pseudomonas fluorescens subsp. cellulosa)).